A 383-amino-acid chain; its full sequence is Geranylgeranyl pyrophosphate synthase esdpD (383 aa).

Isopentenyl diphosphate-binding residues include Lys-88, Arg-91, and His-120. Mg(2+) is bound by residues Asp-150 and Asp-154. Residue Arg-159 coordinates dimethylallyl diphosphate. Arg-160 serves as a coordination point for isopentenyl diphosphate. Dimethylallyl diphosphate contacts are provided by Lys-237, Thr-238, and Gln-271. Asp-274 serves as a coordination point for Mg(2+). Asn-278, Lys-288, and Lys-298 together coordinate dimethylallyl diphosphate.

It belongs to the FPP/GGPP synthase family. It depends on Mg(2+) as a cofactor.

It carries out the reaction isopentenyl diphosphate + dimethylallyl diphosphate = (2E)-geranyl diphosphate + diphosphate. The catalysed reaction is isopentenyl diphosphate + (2E)-geranyl diphosphate = (2E,6E)-farnesyl diphosphate + diphosphate. The enzyme catalyses isopentenyl diphosphate + (2E,6E)-farnesyl diphosphate = (2E,6E,10E)-geranylgeranyl diphosphate + diphosphate. Its pathway is secondary metabolite biosynthesis; terpenoid biosynthesis. In terms of biological role, geranylgeranyl pyrophosphate synthase; part of the cluster that mediates the biosynthesis of shearones, diterpenoid pyrones (DPs) which are structurally diverse meroterpenoids consisting of a diterpene linked by a pyrone, and which may exhibit a range of bioactivities. Within the pathway, esdpD takes part to the biosynthesis of the molecular scaffold by providing geranylgeranyl pyrophosphate (GGPP) to the prenyltransferase esdpC for C-3 geranylgeranylation of the alpha-pyrone. The molecular scaffold is commonly biosynthesized by a series of enzymes including the non-reducing polyketide synthase (NR-PKS) esdpA that generates an alpha-pyrone; the prenyltransferase esdpC that attaches a geranylgeranyl pyrophosphate (GGPP) produced by the GGPP synthase (GGPPS) esdpD onto the pyrone unit; the FAD-dependent monooxygenase esdpE that converts an olefin on the diterpene unit into an epoxide; and the terpene cyclase esdpB that catalyzes the cyclization reactions to give the molecular backbone shearone A. In the modification steps, esdpF oxidizes the hydroxy group to a ketone at C-3 and esdpG then attaches hydroxy groups at both C-11 and C-12. After that, esdpI hydroxylates at C-20 and esdpH hydroxylates at C-6'. The ether bridge is generated by nucleophilic attack of the hydroxy group at C-20 to the carbonyl carbon at C-3. EsdpH can also functions prior to esdpI. The different combinations of these modification enzymes lead to the production of diverse shearone derivatives, shearone I being the end product of the pathway. The alpha-ketoglutarate-dependent dioxygenase esdpJ seems not to be involved in this pathway. The sequence is that of Geranylgeranyl pyrophosphate synthase esdpD from Penicillium shearii (Eupenicillium shearii).